The chain runs to 341 residues: ATP synthase subunit a 2 (341 aa).

Residues 1-33 (MKRVKVIQIKGFFRVMALLAPLLLNAYLPVQAS) form the signal peptide. 6 helical membrane-spanning segments follow: residues 112-132 (VVML…VGAA), 173-193 (LPYL…GLIP), 195-215 (GATA…TFFI), 242-262 (WIIM…ALTV), 273-293 (IVIL…VAAA), and 307-327 (IFVA…FIGL).

This sequence belongs to the ATPase A chain family. As to quaternary structure, F-type ATPases have 2 components, CF(1) - the catalytic core - and CF(0) - the membrane proton channel. CF(1) has five subunits: alpha(3), beta(3), gamma(1), delta(1), epsilon(1). CF(0) has four main subunits: a, b, b' and c.

It is found in the cell inner membrane. Functionally, key component of the proton channel; it plays a direct role in the translocation of protons across the membrane. The polypeptide is ATP synthase subunit a 2 (Chlorobium luteolum (strain DSM 273 / BCRC 81028 / 2530) (Pelodictyon luteolum)).